The sequence spans 190 residues: dCTP deaminase (190 aa).

Residue 113–118 (KSTYAR) coordinates dCTP. E139 functions as the Proton donor/acceptor in the catalytic mechanism. DCTP-binding residues include Q158, Y172, K181, and Q182.

Belongs to the dCTP deaminase family. In terms of assembly, homotrimer.

The enzyme catalyses dCTP + H2O + H(+) = dUTP + NH4(+). The protein operates within pyrimidine metabolism; dUMP biosynthesis; dUMP from dCTP (dUTP route): step 1/2. Catalyzes the deamination of dCTP to dUTP. The sequence is that of dCTP deaminase from Chlamydia caviae (strain ATCC VR-813 / DSM 19441 / 03DC25 / GPIC) (Chlamydophila caviae).